The following is a 343-amino-acid chain: DNA-directed RNA polymerase subunit alpha (343 aa).

The segment at 1–239 (MGETVTIQKN…DQLNVFVNFE (239 aa)) is alpha N-terminal domain (alpha-NTD). The interval 255 to 343 (FNPAFLKKVD…ELAKRFEDHY (89 aa)) is alpha C-terminal domain (alpha-CTD).

The protein belongs to the RNA polymerase alpha chain family. As to quaternary structure, homodimer. The RNAP catalytic core consists of 2 alpha, 1 beta, 1 beta' and 1 omega subunit. When a sigma factor is associated with the core the holoenzyme is formed, which can initiate transcription.

It catalyses the reaction RNA(n) + a ribonucleoside 5'-triphosphate = RNA(n+1) + diphosphate. In terms of biological role, DNA-dependent RNA polymerase catalyzes the transcription of DNA into RNA using the four ribonucleoside triphosphates as substrates. This is DNA-directed RNA polymerase subunit alpha from Bradyrhizobium diazoefficiens (strain JCM 10833 / BCRC 13528 / IAM 13628 / NBRC 14792 / USDA 110).